The chain runs to 218 residues: Cell division protein SepF (218 aa).

Residues 20-81 (DDEYYDDRAP…GYRGGYADEP (62 aa)) form a disordered region. Residues 36 to 65 (PRFDDDYGRYDGRDYDDARSDSRGDLRGEP) are compositionally biased toward basic and acidic residues.

This sequence belongs to the SepF family. Homodimer. Interacts with FtsZ.

It localises to the cytoplasm. Functionally, cell division protein that is part of the divisome complex and is recruited early to the Z-ring. Probably stimulates Z-ring formation, perhaps through the cross-linking of FtsZ protofilaments. Its function overlaps with FtsA. In Mycobacterium bovis (strain ATCC BAA-935 / AF2122/97), this protein is Cell division protein SepF.